The chain runs to 62 residues: MGCGNSTAGGAGGRGATGTTKDAAEESVSDDDKRRNYGGVYVGLPSDAAAMVSGQTKAAPKD.

A compositionally biased stretch (gly residues) spans 1-16; it reads MGCGNSTAGGAGGRGA. The tract at residues 1-62 is disordered; the sequence is MGCGNSTAGG…SGQTKAAPKD (62 aa).

This sequence belongs to the OCC1 family.

This is Overexpressed in colon carcinoma 1 protein homolog from Gallus gallus (Chicken).